The primary structure comprises 248 residues: Molybdate/tungstate transport system permease protein WtpB (248 aa).

Topologically, residues 1–9 are cytoplasmic; the sequence is MGGRDYTLY. A helical transmembrane segment spans residues 10–30; the sequence is LFAALGSFLIVYIALPIIVIF. Residues 31–56 lie on the Extracellular side of the membrane; sequence TKQALDFRMLVKTIHDPLVIEALRNS. Residues 53–239 enclose the ABC transmembrane type-1 domain; that stretch reads LRNSLLTATA…GISLGIFVVL (187 aa). A helical membrane pass occupies residues 57-77; the sequence is LLTATATALISLLFGVPLGYV. The Cytoplasmic segment spans residues 78–91; sequence LARKDFRGKSLVQA. A helical membrane pass occupies residues 92-112; sequence IIDVPIVIPHSVVGIMLLVTF. The Extracellular portion of the chain corresponds to 113–115; it reads SNA. The helical transmembrane segment at 116-136 threads the bilayer; that stretch reads ILDSYKGIIAAMLFVSAPFAI. The Cytoplasmic segment spans residues 137–164; it reads NSARDGFLAVDEKLEHVARTLGASKLRT. Residues 165-185 traverse the membrane as a helical segment; the sequence is FFSISLPIALPSIASGAIMAW. Over 186–223 the chain is Extracellular; it reads ARGISEVGAILIVAYYPKTAQVLVMEYFNNYGLRASRP. Residues 224-244 form a helical membrane-spanning segment; the sequence is ISVILMGISLGIFVVLRWLIG. Residues 245–248 lie on the Cytoplasmic side of the membrane; the sequence is KAKS.

Belongs to the binding-protein-dependent transport system permease family. In terms of assembly, the complex is composed of two ATP-binding proteins (WtpC), two transmembrane proteins (WtpB) and a solute-binding protein (WtpA).

It localises to the cell membrane. In terms of biological role, part of the ABC transporter complex WtpABC involved in molybdate/tungstate import. Probably responsible for the translocation of the substrate across the membrane. This is Molybdate/tungstate transport system permease protein WtpB (wtpB) from Pyrococcus abyssi (strain GE5 / Orsay).